A 54-amino-acid chain; its full sequence is Large ribosomal subunit protein bL32c (54 aa).

Belongs to the bacterial ribosomal protein bL32 family.

Its subcellular location is the plastid. The protein localises to the chloroplast. This is Large ribosomal subunit protein bL32c from Cucumis sativus (Cucumber).